A 392-amino-acid polypeptide reads, in one-letter code: Protein-glutamate methylesterase/protein-glutamine glutaminase (392 aa).

A Response regulatory domain is found at 9 to 126 (TVLIVDDSPF…GADIQALARD (118 aa)). 4-aspartylphosphate is present on Asp60. The interval 148 to 194 (VSRISSASGSRPPWTAGAASENTNRLSSPGSTSSTLGSAKGRSLDSG) is disordered. The segment covering 173 to 185 (LSSPGSTSSTLGS) has biased composition (low complexity). The CheB-type methylesterase domain maps to 198-392 (PKYPVEIVAI…RHIVECVQRR (195 aa)). Catalysis depends on residues Ser210, His237, and Asp334.

This sequence belongs to the CheB family. Post-translationally, phosphorylated by CheA. Phosphorylation of the N-terminal regulatory domain activates the methylesterase activity.

The protein resides in the cytoplasm. The enzyme catalyses [protein]-L-glutamate 5-O-methyl ester + H2O = L-glutamyl-[protein] + methanol + H(+). The catalysed reaction is L-glutaminyl-[protein] + H2O = L-glutamyl-[protein] + NH4(+). Functionally, involved in chemotaxis. Part of a chemotaxis signal transduction system that modulates chemotaxis in response to various stimuli. Catalyzes the demethylation of specific methylglutamate residues introduced into the chemoreceptors (methyl-accepting chemotaxis proteins or MCP) by CheR. Also mediates the irreversible deamidation of specific glutamine residues to glutamic acid. This chain is Protein-glutamate methylesterase/protein-glutamine glutaminase, found in Desulfitobacterium hafniense (strain Y51).